The sequence spans 589 residues: Probable translation initiation factor IF-2 (589 aa).

The tr-type G domain occupies 5–219 (IRTPIVCVLG…IMIGLAQRYL (215 aa)). Residues 14-21 (GHVDHGKT) form a G1 region. 14–21 (GHVDHGKT) provides a ligand contact to GTP. Residues 39–43 (AITQH) are G2. The G3 stretch occupies residues 75–78 (DTPG). GTP is bound by residues 75 to 79 (DTPGH) and 129 to 132 (TKLD). The tract at residues 129–132 (TKLD) is G4. Residues 197–199 (SSM) form a G5 region.

It belongs to the TRAFAC class translation factor GTPase superfamily. Classic translation factor GTPase family. IF-2 subfamily.

Functionally, function in general translation initiation by promoting the binding of the formylmethionine-tRNA to ribosomes. Seems to function along with eIF-2. This Methanocorpusculum labreanum (strain ATCC 43576 / DSM 4855 / Z) protein is Probable translation initiation factor IF-2.